The chain runs to 347 residues: GTPase Obg (347 aa).

Positions 1 to 158 (MFIDNVKLVL…LSVRLELKLI (158 aa)) constitute an Obg domain. In terms of domain architecture, OBG-type G spans 159 to 339 (ADVGLVGFPN…LKFMLLEEVK (181 aa)). GTP-binding positions include 165 to 172 (GFPNVGKS), 190 to 194 (FTTLT), 212 to 215 (DIPG), 280 to 283 (SKSD), and 320 to 322 (SSL). Residues serine 172 and threonine 192 each contribute to the Mg(2+) site.

It belongs to the TRAFAC class OBG-HflX-like GTPase superfamily. OBG GTPase family. In terms of assembly, monomer. The cofactor is Mg(2+).

The protein localises to the cytoplasm. An essential GTPase which binds GTP, GDP and possibly (p)ppGpp with moderate affinity, with high nucleotide exchange rates and a fairly low GTP hydrolysis rate. Plays a role in control of the cell cycle, stress response, ribosome biogenesis and in those bacteria that undergo differentiation, in morphogenesis control. The polypeptide is GTPase Obg (Campylobacter lari (strain RM2100 / D67 / ATCC BAA-1060)).